Consider the following 398-residue polypeptide: Serpin-ZX (398 aa).

An RCL region spans residues 342 to 366 (GTEAAARTARVVTLRSLPVEPVKVD).

It belongs to the serpin family. As to expression, expressed in roots, coleoptiles, shoots, leaves, embryo and endosperm.

Its function is as follows. Inhibits chymotrypsin, cathepsin G and trypsin in vitro. This Hordeum vulgare (Barley) protein is Serpin-ZX (PAZX).